Reading from the N-terminus, the 494-residue chain is PIGF/3-ketodihydrosphingosine reductase fusion protein (494 aa).

The NADPH site is built by Gly-20, Ser-22, and Gly-24. The GXSXG motif lies at 20–24; it reads GGSQG. Leu-25 is a binding site for NADP(+). The NADPH site is built by Arg-45 and Lys-49. Val-54 serves as a coordination point for NADP(+). Residues Asp-74 and Leu-75 each contribute to the NADPH site. A helical transmembrane segment spans residues 148 to 168; it reads ILLVGSLLSSLPIIGYSAYSP. 3 residues coordinate NADP(+): Tyr-166, Lys-170, and Ile-199. The active-site Proton acceptor is Tyr-166. The active-site Lowers pKa of active site Tyr is Lys-170. The next 6 helical transmembrane spans lie at 264–284, 312–332, 370–390, 402–422, 444–464, and 473–493; these read HDNPILEYLFALVSLLAWPFY, IFTLLLTFTQLTIFYLSLNCL, LAGAASMLIGSLLISFILVAF, YFCALTLSVFTVYPLASTLAF, LRSWGPIIGAWFGAFPIPLDW, and ITIVIGAFLGYAFAAIVGEIL.

It in the N-terminal section; belongs to the short-chain dehydrogenases/reductases (SDR) family. In the C-terminal section; belongs to the PIGF family.

The protein localises to the endoplasmic reticulum membrane. It catalyses the reaction sphinganine + NADP(+) = 3-oxosphinganine + NADPH + H(+). It functions in the pathway glycolipid biosynthesis; glycosylphosphatidylinositol-anchor biosynthesis. Its pathway is lipid metabolism; sphingolipid metabolism. Its function is as follows. Acts in the GPI biosynthetic pathway between GlcNAc-PI synthesis and GPI transfer to protein. Required for the formation of complete GPI precursors CP1 and CP2. Catalyzes the reduction of 3'-oxosphinganine (3-ketodihydrosphingosine/KDS) to sphinganine (dihydrosphingosine/DHS), the second step of de novo sphingolipid biosynthesis. The protein is PIGF/3-ketodihydrosphingosine reductase fusion protein of Schizosaccharomyces pombe (strain 972 / ATCC 24843) (Fission yeast).